Consider the following 322-residue polypeptide: Probable cardiolipin synthase (CMP-forming) (322 aa).

3 helical membrane-spanning segments follow: residues Ile-143–Gly-163, Leu-199–Phe-219, and Leu-289–Met-309.

This sequence belongs to the CDP-alcohol phosphatidyltransferase class-I family.

It localises to the mitochondrion inner membrane. It carries out the reaction a CDP-1,2-diacyl-sn-glycerol + a 1,2-diacyl-sn-glycero-3-phospho-(1'-sn-glycerol) = a cardiolipin + CMP + H(+). Catalyzes the synthesis of cardiolipin (CL) (diphosphatidylglycerol) by specifically transferring a phosphatidyl group from CDP-diacylglycerol to phosphatidylglycerol (PG). CL is a key phospholipid in mitochondrial membranes and plays important roles in maintaining the functional integrity and dynamics of mitochondria under both optimal and stress conditions. This chain is Probable cardiolipin synthase (CMP-forming) (CLS), found in Drosophila melanogaster (Fruit fly).